Consider the following 271-residue polypeptide: Pyrroline-5-carboxylate reductase (271 aa).

Belongs to the pyrroline-5-carboxylate reductase family.

The protein resides in the cytoplasm. It carries out the reaction L-proline + NADP(+) = (S)-1-pyrroline-5-carboxylate + NADPH + 2 H(+). It catalyses the reaction L-proline + NAD(+) = (S)-1-pyrroline-5-carboxylate + NADH + 2 H(+). It functions in the pathway amino-acid biosynthesis; L-proline biosynthesis; L-proline from L-glutamate 5-semialdehyde: step 1/1. Functionally, catalyzes the reduction of 1-pyrroline-5-carboxylate (PCA) to L-proline. In Haemophilus influenzae (strain ATCC 51907 / DSM 11121 / KW20 / Rd), this protein is Pyrroline-5-carboxylate reductase.